We begin with the raw amino-acid sequence, 415 residues long: Putative serine/threonine-protein phosphatase 4 regulatory subunit 1-like (415 aa).

4 HEAT repeats span residues 86 to 124 (VMEI…SNFP), 163 to 202 (LLPR…TEKF), 203 to 241 (LIPK…RRTQ), and 242 to 280 (LFPL…RAGL). Low complexity predominate over residues 301–318 (FASGSPAPSSGGNTSPAS). A disordered region spans residues 301–362 (FASGSPAPSS…GPAESPVESC (62 aa)).

Functionally, may be a regulatory subunit of serine/threonine-protein phosphatase 4. This is Putative serine/threonine-protein phosphatase 4 regulatory subunit 1-like (PPP4R1L) from Homo sapiens (Human).